The sequence spans 226 residues: 8-oxoguanine DNA glycosylase/AP lyase (226 aa).

Residues lysine 149 and aspartate 167 contribute to the active site.

This sequence belongs to the type-2 OGG1 family.

The enzyme catalyses 2'-deoxyribonucleotide-(2'-deoxyribose 5'-phosphate)-2'-deoxyribonucleotide-DNA = a 3'-end 2'-deoxyribonucleotide-(2,3-dehydro-2,3-deoxyribose 5'-phosphate)-DNA + a 5'-end 5'-phospho-2'-deoxyribonucleoside-DNA + H(+). In terms of biological role, catalyzes the excision of an oxidatively damaged form of guanine (7,8-dihydro-8-oxoguanine = 8-oxoG) from DNA. Also cleaves the DNA backbone at apurinic/apyrimidinic sites (AP sites). The chain is 8-oxoguanine DNA glycosylase/AP lyase from Aquifex aeolicus (strain VF5).